Reading from the N-terminus, the 313-residue chain is Homoserine O-acetyltransferase (313 aa).

Cys144 functions as the Acyl-thioester intermediate in the catalytic mechanism. 2 residues coordinate substrate: Lys165 and Ser194. Catalysis depends on His236, which acts as the Proton acceptor. Residue Glu238 is part of the active site. Arg250 serves as a coordination point for substrate.

The protein belongs to the MetA family.

The protein localises to the cytoplasm. The catalysed reaction is L-homoserine + acetyl-CoA = O-acetyl-L-homoserine + CoA. Its pathway is amino-acid biosynthesis; L-methionine biosynthesis via de novo pathway; O-acetyl-L-homoserine from L-homoserine: step 1/1. Functionally, transfers an acetyl group from acetyl-CoA to L-homoserine, forming acetyl-L-homoserine. The protein is Homoserine O-acetyltransferase of Jannaschia sp. (strain CCS1).